A 236-amino-acid chain; its full sequence is Activating transcription factor of chaperone (236 aa).

The disordered stretch occupies residues 117-185; it reads HRASQLASPQ…KNAATRYRQK (69 aa). Over residues 120 to 137 the composition is skewed to low complexity; sequence SQLASPQHSSSSANASPR. Residues 162-175 are compositionally biased toward basic and acidic residues; it reads RPVDDRRSRKKEQN. The bZIP domain occupies 165–228; that stretch reads DDRRSRKKEQ…RYLKALMRDL (64 aa). Residues 167–187 form a basic motif region; the sequence is RRSRKKEQNKNAATRYRQKKK. The interval 193 to 228 is leucine-zipper; it reads LLKEEQTLRQRHTELGEKCSDLQREIRYLKALMRDL.

The protein belongs to the bZIP family. Binds DNA as a dimer.

It localises to the nucleus. Functionally, transcriptional activator that acts in the unfolded protein response (UPR) pathway. Acts during endoplasmic reticulum (ER) stress by activating UPR target genes via direct binding to the UPR element (UPRE) (5'-GGAACTGGACAGCGTGTCGAAA-3'). Activates expression of ER chaperones ERP72 and PDI. The chain is Activating transcription factor of chaperone from Bombyx mori (Silk moth).